Consider the following 83-residue polypeptide: Probable calcium-binding protein CML29 (83 aa).

2 EF-hand domains span residues 5–40 (TEKAEHDRIFKKFDANGDGKISAAELEEALKTLGSV) and 43–75 (DDVKRMMAEIDTDGDGNISYQEFTDFAGANRGL). Residues aspartate 18, asparagine 20, aspartate 22, lysine 24, glutamate 29, aspartate 53, aspartate 55, aspartate 57, asparagine 59, and glutamate 64 each coordinate Ca(2+).

Potential calcium sensor. This Arabidopsis thaliana (Mouse-ear cress) protein is Probable calcium-binding protein CML29 (CML29).